Here is a 540-residue protein sequence, read N- to C-terminus: Beta-2-syntrophin (540 aa).

A disordered region spans residues 73–114; the sequence is LPNGGGAGDSLPGSPSRGLGPPSPPAPPRGPAGEAGASPPVR. The segment covering 81–92 has biased composition (low complexity); the sequence is DSLPGSPSRGLG. Pro residues predominate over residues 93 to 102; the sequence is PPSPPAPPRG. Phosphoserine occurs at positions 95, 110, 129, 211, 222, 233, 393, and 395. Residues 103–112 show a composition bias toward low complexity; that stretch reads PAGEAGASPP. A PDZ domain is found at 115-198; it reads RVRVVKQEAG…EVLLEVKFIR (84 aa). 2 PH domains span residues 163-300 and 325-437; these read ILSV…TNIM and EVKH…QGCH. The disordered stretch occupies residues 220-240; that stretch reads PQSPSFSGSEDSGSPKHQNST. The segment covering 222–231 has biased composition (low complexity); sequence SPSFSGSEDS. Residues 484-540 enclose the SU domain; the sequence is PFERLKMSADDGIRNLYLDFGGPEGELTMDLHSCPKPIVFVLHTFLSAKVTRMGLLV. The segment at 518-540 is calmodulin-binding; that stretch reads PKPIVFVLHTFLSAKVTRMGLLV.

The protein belongs to the syntrophin family. As to quaternary structure, monomer and homodimer. Interacts with the other members of the syntrophin family: SNTA1 and SNTB1; and with the sodium channel proteins SCN4A and SCN5A. Interacts with SAST, MAST205, microtubules and microtubule-associated proteins. Interacts with the dystrophin protein DMD and related proteins DTNA and UTRN, and with the neuroregulin receptor ERBB4. Interacts with PTPRN when phosphorylated, protecting PTPRN from protein cleavage by CAPN1. Dephosphorylation upon insulin stimulation disrupts the interaction with PTPRN and results in the cleavage of PTPRN. Interacts with DTNB. In terms of processing, phosphorylated. Partially dephosphorylated upon insulin stimulation. As to expression, ubiquitous. Isoform 1 is the predominant isoform. Weak level of isoform 2 is present in all tested tissues, except in liver and heart where it is highly expressed.

It is found in the membrane. It localises to the cytoplasmic vesicle. Its subcellular location is the secretory vesicle membrane. The protein localises to the cell junction. The protein resides in the cytoplasm. It is found in the cytoskeleton. Functionally, adapter protein that binds to and probably organizes the subcellular localization of a variety of membrane proteins. May link various receptors to the actin cytoskeleton and the dystrophin glycoprotein complex. May play a role in the regulation of secretory granules via its interaction with PTPRN. The polypeptide is Beta-2-syntrophin (SNTB2) (Homo sapiens (Human)).